Reading from the N-terminus, the 536-residue chain is GPI alpha-1,2-mannosyltransferase 3 (536 aa).

Asparagine 15 carries N-linked (GlcNAc...) asparagine glycosylation. The next 2 helical transmembrane spans lie at 40–60 (IFGINITVFIVLVRLLNCVLV) and 118–138 (VYLLVFVPRVFQALLAAYADV). N-linked (GlcNAc...) asparagine glycosylation is present at asparagine 176. 6 helical membrane-spanning segments follow: residues 206–226 (LVSLAVVIRPTALIVWFPLIF), 243–263 (YFPIGVLALGVSTLIDSFFYG), 297–317 (GLPVVIGPHLPLVLHGCLLST), 322–342 (ILLLTIIWTTAVYSLLAHKEF), 344–364 (FIYPVLPFCMIFCGLSLAKLQ), and 369–389 (AAAGALLLFNLCPALYTGLVH). Residue asparagine 467 is glycosylated (N-linked (GlcNAc...) asparagine).

Belongs to the glycosyltransferase 22 family. PIGB subfamily.

It localises to the endoplasmic reticulum membrane. It participates in glycolipid biosynthesis; glycosylphosphatidylinositol-anchor biosynthesis. Alpha-1,2-mannosyltransferase that catalyzes the transfer of the third mannose, via an alpha-1,2 bond, from a dolichol-phosphate-mannose (Dol-P-Man) to an alpha-D-Man-(1-&gt;6)-2-PEtn-alpha-D-Man-(1-&gt;4)-alpha-D-GlcN-(1-&gt;6)-(1-radyl,2-acyl-sn-glycero-3-phospho)-2-acyl-inositol intermediate to generate an alpha-D-Man-(1-&gt;2)-alpha-D-Man-(1-&gt;6)-2-PEtn-alpha-D-Man-(1-&gt;4)-alpha-D-GlcN-(1-&gt;6)-(1-radyl,2-acyl-sn-glycero-3-phospho)-2-acyl-inositol (also termed H6) and participates in the nineth step of the glycosylphosphatidylinositol-anchor biosynthesis. May also add the third mannose to an alpha-D-Man-(1-&gt;6)-alpha-D-Man-(1-&gt;4)-alpha-D-GlcN-(1-&gt;6)-(1-radyl,2-acyl-sn-glycero-3-phospho)-2-acyl-inositol (also termed H3) intermediate generating an alpha-D-Man-(1-&gt;2)-alpha-D-Man-(1-&gt;6)-alpha-D-Man-(1-&gt;4)-alpha-D-GlcN-(1-&gt;6)-(1-radyl,2-acyl-sn-glycero-3-phospho)-2-acyl-inositol (also termed H4). The chain is GPI alpha-1,2-mannosyltransferase 3 from Danio rerio (Zebrafish).